The chain runs to 594 residues: U3 small nucleolar RNA-associated protein 18 (594 aa).

Disordered regions lie at residues 48-128 and 176-200; these read EQEM…WIDS and KWVD…SNNV. Composition is skewed to acidic residues over residues 49–72, 102–128, and 180–196; these read QEMD…DEAQ, TMDV…WIDS, and DESD…EEEG. An interaction with UTP21 region spans residues 101 to 190; it reads DTMDVDDEDD…ESDSELDDEE (90 aa). Phosphoserine is present on residues serine 182 and serine 184. WD repeat units lie at residues 246–285, 290–334, 463–504, 513–554, and 560–593; these read PSHS…NHLV, LVGS…LTHS, GTTT…TSST, QLTT…VFSN, and TPLG…KLNH.

This sequence belongs to the WD repeat UTP18 family. In terms of assembly, interacts with snoRNA U3. Interacts with MPP10, UTP21 and UTP25. Component of the ribosomal small subunit (SSU) processome composed of at least 40 protein subunits and snoRNA U3.

It localises to the nucleus. It is found in the nucleolus. In terms of biological role, involved in nucleolar processing of pre-18S ribosomal RNA and ribosome assembly. The sequence is that of U3 small nucleolar RNA-associated protein 18 (UTP18) from Saccharomyces cerevisiae (strain ATCC 204508 / S288c) (Baker's yeast).